Consider the following 335-residue polypeptide: Adenosine deaminase (335 aa).

Positions 12 and 14 each coordinate Zn(2+). Substrate is bound by residues His-14 and Asp-16. His-197 provides a ligand contact to Zn(2+). The active-site Proton donor is Glu-200. Asp-278 lines the Zn(2+) pocket.

Belongs to the metallo-dependent hydrolases superfamily. Adenosine and AMP deaminases family. Adenosine deaminase subfamily. Zn(2+) serves as cofactor.

The catalysed reaction is adenosine + H2O + H(+) = inosine + NH4(+). It carries out the reaction 2'-deoxyadenosine + H2O + H(+) = 2'-deoxyinosine + NH4(+). Catalyzes the hydrolytic deamination of adenosine and 2-deoxyadenosine. This chain is Adenosine deaminase, found in Clostridium botulinum (strain Loch Maree / Type A3).